The sequence spans 226 residues: PKHD-type hydroxylase Bind_0236 (226 aa).

The Fe2OG dioxygenase domain maps to 78 to 178 (TIFPPLFNRY…RIASFFWIQS (101 aa)). 3 residues coordinate Fe cation: His96, Asp98, and His159. Residue Arg169 participates in 2-oxoglutarate binding.

It depends on Fe(2+) as a cofactor. L-ascorbate is required as a cofactor.

The protein is PKHD-type hydroxylase Bind_0236 of Beijerinckia indica subsp. indica (strain ATCC 9039 / DSM 1715 / NCIMB 8712).